The sequence spans 528 residues: Nucleobase-ascorbate transporter 5 (528 aa).

Residues 1–20 (MSAPKSGGDPLPHPPKEQLP) form a disordered region. The next 12 helical transmembrane spans lie at 35–55 (AVLL…LIPS), 71–91 (LIQT…VFGT), 93–113 (LPAV…IMLS), 133–153 (TQGA…SGLW), 159–179 (FLSP…LYEL), 181–201 (FPGV…LILI), 219–239 (FAVI…TLGG), 285–305 (FAMM…FIAV), 367–387 (AGFM…ASIP), 390–410 (IIAA…LSLL), 418–438 (FRTL…PQYF), and 460–479 (MVNV…AYLL).

It belongs to the nucleobase:cation symporter-2 (NCS2) (TC 2.A.40) family. In terms of tissue distribution, weakly expressed in the vasculature of developing leaves.

The protein resides in the membrane. This is Nucleobase-ascorbate transporter 5 (NAT5) from Arabidopsis thaliana (Mouse-ear cress).